Reading from the N-terminus, the 453-residue chain is Serine/threonine-protein phosphatase 2A regulatory subunit B'' subunit gamma (453 aa).

EF-hand domains lie at 273 to 308 (PSAL…TMTN) and 341 to 376 (KEPA…IQEL). Ca(2+) contacts are provided by aspartate 286, aspartate 288, asparagine 290, methionine 292, and glutamate 297.

As to quaternary structure, interacts with MCM3AP/GANP, PPP5C, and the phosphatase 2A core enzyme composed of the PPP2CA catalytic subunit and the constant regulatory subunit PPP2R1A. Finds in a complex with ABCB1, TFPI2 and PPP2R3C; leading to the dephosphorylation of ABCB1.

The protein resides in the nucleus. Its subcellular location is the cytoplasm. Functionally, may regulate MCM3AP phosphorylation through phosphatase recruitment. May act as a negative regulator of ABCB1 expression and function through the dephosphorylation of ABCB1 by TFPI2/PPP2R3C complex. May play a role in the activation-induced cell death of B-cells. The protein is Serine/threonine-protein phosphatase 2A regulatory subunit B'' subunit gamma (PPP2R3C) of Bos taurus (Bovine).